A 243-amino-acid chain; its full sequence is Small ribosomal subunit protein uS5 (243 aa).

Positions 1–10 are enriched in basic and acidic residues; that stretch reads MSDNETKETQ. The disordered stretch occupies residues 1–50; sequence MSDNETKETQVAEETQNTVATESNNEDRKGRRGQRGEGRRGERRNRREEN. Residues 12-23 show a composition bias toward polar residues; the sequence is AEETQNTVATES. The segment covering 25 to 50 has biased composition (basic and acidic residues); the sequence is NEDRKGRRGQRGEGRRGERRNRREEN. Positions 55-118 constitute an S5 DRBM domain; the sequence is LLDRVVTINR…LDAKKHMFSV (64 aa).

This sequence belongs to the universal ribosomal protein uS5 family. As to quaternary structure, part of the 30S ribosomal subunit. Contacts proteins S4 and S8.

Its function is as follows. With S4 and S12 plays an important role in translational accuracy. Located at the back of the 30S subunit body where it stabilizes the conformation of the head with respect to the body. In Bifidobacterium longum (strain DJO10A), this protein is Small ribosomal subunit protein uS5.